The chain runs to 261 residues: Small ribosomal subunit protein eS1z (261 aa).

Residues 1-18 (MAVGKNKRISKGKKGGKK) show a composition bias toward basic residues. Residues 1-20 (MAVGKNKRISKGKKGGKKKA) form a disordered region.

This sequence belongs to the eukaryotic ribosomal protein eS1 family. As to quaternary structure, component of the small ribosomal subunit. Mature ribosomes consist of a small (40S) and a large (60S) subunit. The 40S subunit contains about 33 different proteins and 1 molecule of RNA (18S). The 60S subunit contains about 49 different proteins and 3 molecules of RNA (25S, 5.8S and 5S).

It is found in the cytoplasm. This chain is Small ribosomal subunit protein eS1z, found in Vitis vinifera (Grape).